We begin with the raw amino-acid sequence, 288 residues long: Pantothenate synthetase (288 aa).

ATP is bound at residue 30 to 37 (MGALHEGH). Histidine 37 (proton donor) is an active-site residue. (R)-pantoate is bound at residue glutamine 61. Glutamine 61 contributes to the beta-alanine binding site. Residue 147-150 (GEKD) coordinates ATP. Glutamine 153 is a (R)-pantoate binding site. Residues leucine 176 and 184 to 187 (ISSR) each bind ATP.

Belongs to the pantothenate synthetase family. In terms of assembly, homodimer.

The protein resides in the cytoplasm. It carries out the reaction (R)-pantoate + beta-alanine + ATP = (R)-pantothenate + AMP + diphosphate + H(+). The protein operates within cofactor biosynthesis; (R)-pantothenate biosynthesis; (R)-pantothenate from (R)-pantoate and beta-alanine: step 1/1. In terms of biological role, catalyzes the condensation of pantoate with beta-alanine in an ATP-dependent reaction via a pantoyl-adenylate intermediate. The chain is Pantothenate synthetase from Prosthecochloris aestuarii (strain DSM 271 / SK 413).